We begin with the raw amino-acid sequence, 184 residues long: uncharacterized protein (184 aa).

The chain crosses the membrane as a helical span at residues 35–55 (LSFLIYILYTFSISGLSTFVI).

It localises to the membrane. This is an uncharacterized protein from Schizosaccharomyces pombe (strain 972 / ATCC 24843) (Fission yeast).